Reading from the N-terminus, the 476-residue chain is Aspartyl/glutamyl-tRNA(Asn/Gln) amidotransferase subunit B (476 aa).

The protein belongs to the GatB/GatE family. GatB subfamily. Heterotrimer of A, B and C subunits.

The enzyme catalyses L-glutamyl-tRNA(Gln) + L-glutamine + ATP + H2O = L-glutaminyl-tRNA(Gln) + L-glutamate + ADP + phosphate + H(+). The catalysed reaction is L-aspartyl-tRNA(Asn) + L-glutamine + ATP + H2O = L-asparaginyl-tRNA(Asn) + L-glutamate + ADP + phosphate + 2 H(+). Allows the formation of correctly charged Asn-tRNA(Asn) or Gln-tRNA(Gln) through the transamidation of misacylated Asp-tRNA(Asn) or Glu-tRNA(Gln) in organisms which lack either or both of asparaginyl-tRNA or glutaminyl-tRNA synthetases. The reaction takes place in the presence of glutamine and ATP through an activated phospho-Asp-tRNA(Asn) or phospho-Glu-tRNA(Gln). The chain is Aspartyl/glutamyl-tRNA(Asn/Gln) amidotransferase subunit B from Listeria welshimeri serovar 6b (strain ATCC 35897 / DSM 20650 / CCUG 15529 / CIP 8149 / NCTC 11857 / SLCC 5334 / V8).